Consider the following 117-residue polypeptide: MAFSGRARPCIIPENEEIPRAALNTVHEANGTEDERAVSKLQRRHSDVKVYKEFCDFYAKFNMANALASATCERCKGGFAPAETIVNSNGELYHEQCFVCAQCFQQFPEGLFYEERT.

The 48-residue stretch at 70 to 117 (ATCERCKGGFAPAETIVNSNGELYHEQCFVCAQCFQQFPEGLFYEERT) folds into the LIM zinc-binding domain.

Detected in testis.

It localises to the cytoplasm. The polypeptide is LIM and senescent cell antigen-like-containing domain protein 3 (LIMS3) (Homo sapiens (Human)).